A 671-amino-acid chain; its full sequence is UvrABC system protein B (671 aa).

Positions 31–189 (KGFEEGKKEQ…QLVDIQFDRN (159 aa)) constitute a Helicase ATP-binding domain. 44–51 (GATGTGKT) contributes to the ATP binding site. Positions 97-120 (YYDYYQPEAYVPSTDTYIEKDSAI) match the Beta-hairpin motif. Residues 437 to 599 (QIDDLVGEIN…ITPKTIIKPI (163 aa)) enclose the Helicase C-terminal domain. A UVR domain is found at 634–669 (KELVANLRSQMQAAAKKLDFEQAASLRDTILELQAD).

It belongs to the UvrB family. As to quaternary structure, forms a heterotetramer with UvrA during the search for lesions. Interacts with UvrC in an incision complex.

The protein localises to the cytoplasm. The UvrABC repair system catalyzes the recognition and processing of DNA lesions. A damage recognition complex composed of 2 UvrA and 2 UvrB subunits scans DNA for abnormalities. Upon binding of the UvrA(2)B(2) complex to a putative damaged site, the DNA wraps around one UvrB monomer. DNA wrap is dependent on ATP binding by UvrB and probably causes local melting of the DNA helix, facilitating insertion of UvrB beta-hairpin between the DNA strands. Then UvrB probes one DNA strand for the presence of a lesion. If a lesion is found the UvrA subunits dissociate and the UvrB-DNA preincision complex is formed. This complex is subsequently bound by UvrC and the second UvrB is released. If no lesion is found, the DNA wraps around the other UvrB subunit that will check the other stand for damage. This Lacticaseibacillus casei (strain BL23) (Lactobacillus casei) protein is UvrABC system protein B.